We begin with the raw amino-acid sequence, 617 residues long: Membrane protein insertase YidC (617 aa).

The helical transmembrane segment at 8–28 (MFVAIGLSLLVLLGWQYFVAG) threads the bilayer. Residues 36–49 (QIEAQNKAAQQQPP) are compositionally biased toward polar residues. A disordered region spans residues 36–91 (QIEAQNKAAQQQPPGVTPDGVPSPSPKEGGPAAPAPGTLPTAQGGPVSREAALARS). Residues 61 to 81 (PKEGGPAAPAPGTLPTAQGGP) show a composition bias toward low complexity. 4 consecutive transmembrane segments (helical) span residues 387–407 (LFGN…LLFL), 461–481 (WPVL…FITI), 517–533 (FVHL…TMFV), and 549–569 (IFTF…AGLV).

It belongs to the OXA1/ALB3/YidC family. Type 1 subfamily. As to quaternary structure, interacts with the Sec translocase complex via SecD. Specifically interacts with transmembrane segments of nascent integral membrane proteins during membrane integration.

It localises to the cell inner membrane. Its function is as follows. Required for the insertion and/or proper folding and/or complex formation of integral membrane proteins into the membrane. Involved in integration of membrane proteins that insert both dependently and independently of the Sec translocase complex, as well as at least some lipoproteins. Aids folding of multispanning membrane proteins. This Methylobacterium radiotolerans (strain ATCC 27329 / DSM 1819 / JCM 2831 / NBRC 15690 / NCIMB 10815 / 0-1) protein is Membrane protein insertase YidC.